A 71-amino-acid chain; its full sequence is Venom peptide 2-long (71 aa).

The signal sequence occupies residues 1–24 (MKQSIIIALFATIAVMACLQMVAA). AXPX repeat units lie at residues 24 to 27 (AVPA), 32 to 35 (AAPG), 44 to 47 (ASPE), 50 to 53 (ASPE), and 54 to 57 (AEPI). Positions 25 to 54 (VPAPVPEAAPGPVAEAEAYASPEALASPEA) are excised as a propeptide. Leu-68 carries the post-translational modification Leucine amide.

It belongs to the MCD family. Protonectin subfamily. In terms of tissue distribution, expressed by the venom gland.

It is found in the secreted. Its subcellular location is the target cell membrane. Functionally, antimicrobial peptide with strong activity against the fungus B.cinerea (MIC=0.5 ug/ml), and poor activities against the fungus C.albicans (MIC=100 ug/ml), the Gram-positive bacterium S.aureus (MIC=125 ug/ml) and the Gram-negative bacterium E.coli (MIC=125 ug/ml). In terms of biological role, antimicrobial peptide with strong activity against the fungus B.cinerea (MIC=0.4 uM), and poor activities against the fungus C.albicans (MIC=16 uM), the Gram-positive bacterium S.aureus (MIC=20 uM) and the Gram-negative bacterium E.coli (MIC=79 uM). Shows cytolytic activity against insect cell lines. Has potent hemolytic activity against ovine erythrocytes. Has potent hemolytic activity against human erythrocytes (EC(50)=31 uM). In vivo, peptide injection in the vicinity of the head and thorax of lepidopteran larvae induces feeding disorder followed by death due to starvation. The protein is Venom peptide 2-long of Orancistrocerus drewseni (Solitary wasp).